Reading from the N-terminus, the 703-residue chain is Probable ATP-dependent RNA helicase vasa-like (703 aa).

Disordered stretches follow at residues 1–22, 35–73, and 88–167; these read MSDD…ESFG, NTGN…GRGG, and RDCP…RGCF. The segment covering 61–73 has biased composition (gly residues); that stretch reads SGGGGFGGRGRGG. The segment at 77–92 adopts a CCHC-type 1 zinc-finger fold; the sequence is CFKCGDEGHMARDCPS. Residues 146 to 155 show a composition bias toward gly residues; the sequence is FGFGSGSGSR. CCHC-type zinc fingers lie at residues 166 to 181 and 189 to 204; these read CFKC…DCPS and CFKC…DCPN. Residues 261–289 carry the Q motif motif; sequence ESFQSMNLRPLLLENIVKAGYGCPTPVQK. The region spanning 292-475 is the Helicase ATP-binding domain; that stretch reads IPNVMNGRDI…SAFLNNYLFV (184 aa). ATP is bound at residue 305–312; sequence AQTGSGKT. Residues 419-422 carry the DEAD box motif; that stretch reads DEAD. Residues 506-651 enclose the Helicase C-terminal domain; the sequence is MCEEILISAD…TIPDWLTQKA (146 aa). The disordered stretch occupies residues 676–703; the sequence is GGGRGWEKNQASSFLGGPSESNVDEEWD.

Belongs to the DEAD box helicase family. DDX4/VASA subfamily. In terms of tissue distribution, expressed in ovaries and testis. Not expressed in somatic tissue of the ovaries including follicle cells, muscle and connective tissue.

It localises to the cytoplasm. It is found in the nucleus. Its subcellular location is the nucleolus. It carries out the reaction ATP + H2O = ADP + phosphate + H(+). In terms of biological role, involved in translational control mechanisms operating in early stages of oogenesis. Required maternally in many stages of oogenesis, including cystocyte differentiation, oocyte differentiation, and specification of anterior-posterior polarity in the developing cysts. Essential for the formation and/or structural integrity of perinuclear nuage particles during germ cell formation. This chain is Probable ATP-dependent RNA helicase vasa-like, found in Penaeus vannamei (Whiteleg shrimp).